Here is a 108-residue protein sequence, read N- to C-terminus: Nitrogenase-stabilizing/protective protein NifW (108 aa).

The protein belongs to the NifW family. As to quaternary structure, homotrimer; associates with NifD.

May protect the nitrogenase Fe-Mo protein from oxidative damage. The chain is Nitrogenase-stabilizing/protective protein NifW from Zymomonas mobilis subsp. mobilis (strain ATCC 31821 / ZM4 / CP4).